We begin with the raw amino-acid sequence, 355 residues long: Protein RecA (355 aa).

67–74 is an ATP binding site; sequence GPESSGKT.

This sequence belongs to the RecA family.

It localises to the cytoplasm. In terms of biological role, can catalyze the hydrolysis of ATP in the presence of single-stranded DNA, the ATP-dependent uptake of single-stranded DNA by duplex DNA, and the ATP-dependent hybridization of homologous single-stranded DNAs. It interacts with LexA causing its activation and leading to its autocatalytic cleavage. This is Protein RecA from Proteus mirabilis (strain HI4320).